The chain runs to 286 residues: Versiconal hemiacetal acetate esterase stcI (286 aa).

The short motif at 54–56 (HAG) is the Involved in the stabilization of the negatively charged intermediate by the formation of the oxyanion hole element. Active-site residues include S123, D226, and H256.

The protein belongs to the 'GDXG' lipolytic enzyme family.

The catalysed reaction is (2S,3S)-versiconal hemiacetal acetate + H2O = (2S-3S)-versiconal hemiacetal + acetate + H(+). It catalyses the reaction (3S)-versiconol acetate + H2O = (S)-versiconol + acetate + H(+). It functions in the pathway mycotoxin biosynthesis; sterigmatocystin biosynthesis. Functionally, esterase; part of the gene cluster that mediates the biosynthesis of sterigmatocystin (ST), a polyketide-derived furanocoumarin which is part of the most toxic and carcinogenic compounds among the known mycotoxins. The first step in the biosynthesis of sterigmatocystin is the production of hexanoate by the fatty acid synthase (FAS) units stcJ and stcK. The polyketide backbone is assembled by the non-reducing polyketide synthase stcA by condensation of the starter hexanoyl-CoA and 7 malonyl-CoA extender units followed by cyclization and release of norsolorinic acid. Norsolorinic acid is the first stable intermediate in the biosynthesis of sterigmatocystin and is converted into averantin (AVN) by the ketoreductase stcE which reduces the hexanoate ketone to an alcohol. Averantin is then oxidized into 5'-hydroxyaverantin (HAVN) by the cytochrome P450 monooxygenase stcF. 5'-hydroxyaverantin is further converted to 5'-oxyaverantin (OAVN) by the 5'-hydroxyaverantin dehydrogenase stcG. The next step is the conversion of OAVN into averufin (AVF) which is catalyzed by a yet to be identified enzyme. The cytochrome P450 monooxygenase stcB and the flavin-binding monooxygenase stcW are both required for the conversion of averufin to 1-hydroxyversicolorone. The esterase stcI probably catalyzes the formation of versiconal hemiacetal acetate from 1-hydroxyversicolorone. The oxydoreductase stcN then probably catalyzes the biosynthetic step from versiconal to versicolorin B (VERB). The next step is performed by the versicolorin B desaturase stcL to produce versicolorin A (VERA). The ketoreductase stcU and the cytochrome P450 monooxygenase stcS are involved in the conversion of versicolorin A to demethylsterigmatocystin. The Baeyer-Villiger oxidas stcQ and the reductase stcR might be involved in the biosynthetic step from versicolorin A to demethylsterigmatocystin. The final step in the biosynthesis of sterigmatocystin is the methylation of demethylsterigmatocystin catalyzed by the methyltransferase stcP. The sequence is that of Versiconal hemiacetal acetate esterase stcI from Emericella nidulans (strain FGSC A4 / ATCC 38163 / CBS 112.46 / NRRL 194 / M139) (Aspergillus nidulans).